The chain runs to 244 residues: tRNA (guanine-N(7)-)-methyltransferase (244 aa).

Positions 1–11 are enriched in pro residues; that stretch reads MTDTHVPPPEL. The interval 1–23 is disordered; sequence MTDTHVPPPELPAAEEGEERPHR. E74, E99, D126, and D149 together coordinate S-adenosyl-L-methionine. D149 is an active-site residue. Residues K153, D185, and 222 to 225 contribute to the substrate site; that span reads TKFE.

The protein belongs to the class I-like SAM-binding methyltransferase superfamily. TrmB family.

The enzyme catalyses guanosine(46) in tRNA + S-adenosyl-L-methionine = N(7)-methylguanosine(46) in tRNA + S-adenosyl-L-homocysteine. The protein operates within tRNA modification; N(7)-methylguanine-tRNA biosynthesis. Catalyzes the formation of N(7)-methylguanine at position 46 (m7G46) in tRNA. The sequence is that of tRNA (guanine-N(7)-)-methyltransferase from Pseudomonas syringae pv. tomato (strain ATCC BAA-871 / DC3000).